The sequence spans 352 residues: Glucose-6-phosphatase catalytic subunit 1 (352 aa).

Over 1–27 (MDLLHSWGVELAVYLQTRYGKYEGLFD) the chain is Lumenal. A helical transmembrane segment spans residues 28 to 48 (LASTVADLHTTFFWLFPIWFH). The Cytoplasmic portion of the chain corresponds to 49–56 (LRRDTALR). A helical membrane pass occupies residues 57–77 (LIWVAVIGDWLNLVLKWVLFG). The Lumenal portion of the chain corresponds to 78–113 (ERPYWWVHETKFYGAGPAPSLQQFPITCETGPGSPS). Residue Arg79 coordinates substrate. A helical membrane pass occupies residues 114 to 134 (GHAMGAAGVWYVMVTALLSIA). His115 acts as the Proton donor in catalysis. Topologically, residues 135–141 (REKQCPP) are cytoplasmic. Residues 142–162 (LLYRFLYIGLWMLMGLVELVV) traverse the membrane as a helical segment. Over 163–166 (CISR) the chain is Lumenal. Residue Arg166 coordinates substrate. A helical membrane pass occupies residues 167 to 187 (VYMAAHFPHQVIAGIITGTLV). The Nucleophile role is filled by His172. Topologically, residues 188 to 205 (AEVVSKEKWIYSASLKKY) are cytoplasmic. A helical transmembrane segment spans residues 206–226 (FLITLFLTSFAVGFYVLLKAL). The Lumenal portion of the chain corresponds to 227-256 (DVDLLWTMEKAQKWCIRPEWVHLDSAPFAS). The helical transmembrane segment at 257–276 (LLRNMGSLFGLGLGLHSPFY) threads the bilayer. The Cytoplasmic portion of the chain corresponds to 277-289 (KTTKMRIMSAPLR). A helical transmembrane segment spans residues 290–310 (IGCIVISVSLLHLLDGWTFSP). Topologically, residues 311 to 324 (ENHMTFYALSFGKS) are lumenal. The chain crosses the membrane as a helical span at residues 325 to 345 (AVALLIPTTLVPWALSKIYPV). Over 346–352 (KTEGKNL) the chain is Cytoplasmic. A Prevents secretion from ER motif is present at residues 349 to 352 (GKNL).

It belongs to the glucose-6-phosphatase family.

It is found in the endoplasmic reticulum membrane. It carries out the reaction D-glucose 6-phosphate + H2O = D-glucose + phosphate. Its pathway is carbohydrate biosynthesis; gluconeogenesis. Functionally, hydrolyzes glucose-6-phosphate to glucose in the endoplasmic reticulum. Forms with the glucose-6-phosphate transporter (SLC37A4/G6PT) the complex responsible for glucose production in the terminal step of glycogenolysis and gluconeogenesis. Hence, it is the key enzyme in homeostatic regulation of blood glucose levels. The chain is Glucose-6-phosphatase catalytic subunit 1 (g6pc1) from Haplochromis nubilus (Blue Victoria mouthbrooder).